The sequence spans 443 residues: KH domain-containing, RNA-binding, signal transduction-associated protein 1 (443 aa).

The interval 1–96 (MQRRDDPAAR…LPPSATASVK (96 aa)) is disordered. Low complexity predominate over residues 10 to 21 (RMSRSSGRSGSM). Phosphoserine occurs at positions 18, 20, and 29. Thr-33 carries the phosphothreonine modification. An Asymmetric dimethylarginine; by PRMT1 modification is found at Arg-45. The residue at position 52 (Arg-52) is an Asymmetric dimethylarginine; partial; by PRMT1. Position 58 is a phosphoserine (Ser-58). Thr-84 carries the phosphothreonine; by MAPK1 modification. Glycyl lysine isopeptide (Lys-Gly) (interchain with G-Cter in SUMO2) cross-links involve residues Lys-96 and Lys-102. Residues 100–260 (ENKYLPELMA…VKKFLVPDMM (161 aa)) are involved in homodimerization. The residue at position 113 (Ser-113) is a Phosphoserine. A Glycyl lysine isopeptide (Lys-Gly) (interchain with G-Cter in SUMO2) cross-link involves residue Lys-139. Ser-150 is subject to Phosphoserine. Residues 171–197 (NFVGKILGPQGNTIKRLQEETGAKISV) enclose the KH domain. Lys-175 is modified (N6-acetyllysine; alternate). Lys-175 is covalently cross-linked (Glycyl lysine isopeptide (Lys-Gly) (interchain with G-Cter in SUMO2); alternate). Residue Thr-183 is modified to Phosphothreonine. Residues 280–293 (PSRGRGVPVRGRGA) show a composition bias toward low complexity. The segment at 280–316 (PSRGRGVPVRGRGAAPPPPPVPRGRGVGPPRGALVRG) is disordered. Omega-N-methylarginine is present on residues Arg-282, Arg-284, and Arg-291. The residue at position 304 (Arg-304) is an Asymmetric dimethylarginine; by PRMT1. A compositionally biased stretch (low complexity) spans 307-316 (GPPRGALVRG). Omega-N-methylarginine; by PRMT1 occurs at positions 310, 315, 320, and 325. Arg-320 carries the dimethylated arginine; in A2780 ovarian carcinoma cell line modification. The interval 327-346 (ATVTRGVPPPPTVRGAPAPR) is disordered. Arg-331 and Arg-340 each carry dimethylated arginine; in A2780 ovarian carcinoma cell line. Arg-331 is modified (asymmetric dimethylarginine; alternate). Arg-331 carries the post-translational modification Omega-N-methylarginine; by PRMT1; alternate. At Arg-340 the chain carries Omega-N-methylarginine; by PRMT1. The interaction with HNRNPA1 stretch occupies residues 351-443 (GIQRIPLPPP…AYREHPYGRY (93 aa)). A Phosphotyrosine modification is found at Tyr-387. A Phosphoserine modification is found at Ser-390. The interval 400 to 420 (GHGEVQDSYEAYGQDDWNGTR) is interaction with ZBTB7A. The tract at residues 411–443 (YGQDDWNGTRPSLKAPPARPVKGAYREHPYGRY) is disordered. Residue Lys-432 forms a Glycyl lysine isopeptide (Lys-Gly) (interchain with G-Cter in SUMO2) linkage. The span at 434 to 443 (AYREHPYGRY) shows a compositional bias: basic and acidic residues. Phosphotyrosine; by PTK6 occurs at positions 435, 440, and 443.

Belongs to the KHDRBS family. In terms of assembly, self-associates to form homooligomers when bound to RNA, oligomerization appears to be limited when binding to proteins; dimerization increases RNA affinity. Forms a trimeric complex in the nucleus consisting of BANP, HDAC6 and KHDRBS1/SAM68; HDAC6 keeps KHDRBS1 in a deacetylated state which inhibits the inclusion of CD44 alternate exons. The complex is disrupted by MAPK1/MAPK3-mediated phosphorylation of BANP which results in BANP export to the cytoplasm. This facilitates acetylation of KHDRBS1 and CD44 variant exon inclusion. Interacts with KHDRBS3/SLIM-2. Interacts with KHDRBS2/SLIM-1; heterooligomer formation of KHDRBS family proteins may modulate RNA substrate specificity. Interacts with RASA1, LCK, FYN, PTPN6, PLCG1, GRB2, CBL, JAK3, PIK3R, STAT3, APC, HNRNPA1. Interacts with PTK6 (via SH3 and SH2 domains). Forms a complex with ILF2, ILF3, YLPM1, RBMX, NCOA5 and PPP1CA. Does not interact with TPR. Interacts with PRMT1. Binds WBP4/FBP21 (via WW domains), FNBP4/FBP30 (via WW domains). Interacts (via Arg/Gly-rich-flanked Pro-rich regions) with FYN (via the SH3 domain). Interacts with the non-receptor tyrosine kinase SRMS; the interaction leads to phosphorylation of KHDRBS1. Interacts with ZBTB7A; negatively regulates KHDRBS1 splicing activity toward BCL2L1. Tyrosine phosphorylated by several non-receptor tyrosine kinases including LCK, FYN and JAK3. Also tyrosine phosphorylated by the non-receptor tyrosine kinase SRMS in an EGF-dependent manner. Negatively correlates with ability to bind RNA but required for many interactions with proteins. Phosphorylation by PTK6 negatively regulates its RNA binding ability. Phosphorylation by PTK6 at Tyr-440 dictates the nuclear localization of KHDRBS1. Phosphorylation at Tyr-387 disrupts interaction with APC. Phosphorylation at tyrosine residues by FYN inverts activity on modulation of BCL2L1 alternative splicing. In terms of processing, acetylated. Positively correlates with ability to bind RNA. Deacetylated by HDAC6; this regulates alternative splicing by inhibiting the inclusion of CD44 alternate exons. Post-translationally, arginine methylation is required for nuclear localization. Also can affect interaction with other proteins. Inhibits interaction with Src-like SH3 domains, but not interaction with WW domains of WBP4/FBP21 and FNBP4/FBP30. Ubiquitously expressed in all tissue examined. Isoform 1 is expressed at lower levels in brain, skeletal muscle, and liver whereas isoform 3 is intensified in skeletal muscle and in liver.

The protein resides in the nucleus. The protein localises to the cytoplasm. It localises to the membrane. In terms of biological role, recruited and tyrosine phosphorylated by several receptor systems, for example the T-cell, leptin and insulin receptors. Once phosphorylated, functions as an adapter protein in signal transduction cascades by binding to SH2 and SH3 domain-containing proteins. Role in G2-M progression in the cell cycle. Represses CBP-dependent transcriptional activation apparently by competing with other nuclear factors for binding to CBP. Also acts as a putative regulator of mRNA stability and/or translation rates and mediates mRNA nuclear export. Positively regulates the association of constitutive transport element (CTE)-containing mRNA with large polyribosomes and translation initiation. According to some authors, is not involved in the nucleocytoplasmic export of unspliced (CTE)-containing RNA species according to. RNA-binding protein that plays a role in the regulation of alternative splicing and influences mRNA splice site selection and exon inclusion. Binds to RNA containing 5'-[AU]UAA-3' as a bipartite motif spaced by more than 15 nucleotides. Binds poly(A). Can regulate CD44 alternative splicing in a Ras pathway-dependent manner. In cooperation with HNRNPA1 modulates alternative splicing of BCL2L1 by promoting splicing toward isoform Bcl-X(S), and of SMN1. Can regulate alternative splicing of NRXN1 and NRXN3 in the laminin G-like domain 6 containing the evolutionary conserved neurexin alternative spliced segment 4 (AS4) involved in neurexin selective targeting to postsynaptic partners. In a neuronal activity-dependent manner cooperates synergistically with KHDRBS2/SLIM-1 in regulation of NRXN1 exon skipping at AS4. The cooperation with KHDRBS2/SLIM-1 is antagonistic for regulation of NXRN3 alternative splicing at AS4. Functionally, isoform 3, which is expressed in growth-arrested cells only, inhibits S phase. The protein is KH domain-containing, RNA-binding, signal transduction-associated protein 1 of Homo sapiens (Human).